We begin with the raw amino-acid sequence, 146 residues long: Hemoglobin subunit beta-1 (146 aa).

One can recognise a Globin domain in the interval 2-146 (KWTDKERAVI…VVSALGKQYC (145 aa)). Residues histidine 63 and histidine 92 each contribute to the heme b site.

This sequence belongs to the globin family. As to quaternary structure, heterotetramer of two alpha chains and two beta chains. Red blood cells.

Involved in oxygen transport from gills to the various peripheral tissues. This chain is Hemoglobin subunit beta-1, found in Lycodes reticulatus (Arctic eelpout).